We begin with the raw amino-acid sequence, 86 residues long: uncharacterized protein (86 aa).

2 helical membrane passes run 21–43 (VFWVGLVVYYGFVALCWIGEATA) and 53–75 (FWYASFLGTFLIPLFMSIIYFYF).

It is found in the cell membrane. This is an uncharacterized protein from Archaeoglobus fulgidus (strain ATCC 49558 / DSM 4304 / JCM 9628 / NBRC 100126 / VC-16).